We begin with the raw amino-acid sequence, 517 residues long: GMP synthase [glutamine-hydrolyzing] (517 aa).

A Glutamine amidotransferase type-1 domain is found at 11–202 (KIIVLDFGSQ…AFKVCGAKAN (192 aa)). Cys88 functions as the Nucleophile in the catalytic mechanism. Residues His176 and Glu178 contribute to the active site. Residues 203–392 (WTMDDFIEMQ…LGIPHDLVWR (190 aa)) enclose the GMPS ATP-PPase domain. 230 to 236 (SGGVDSS) serves as a coordination point for ATP.

Homodimer.

The enzyme catalyses XMP + L-glutamine + ATP + H2O = GMP + L-glutamate + AMP + diphosphate + 2 H(+). Its pathway is purine metabolism; GMP biosynthesis; GMP from XMP (L-Gln route): step 1/1. Functionally, catalyzes the synthesis of GMP from XMP. This Lactobacillus johnsonii (strain CNCM I-12250 / La1 / NCC 533) protein is GMP synthase [glutamine-hydrolyzing].